The primary structure comprises 224 residues: MKLKDFPDEERPRERLLNTGAESLSNHELLAILLRTGTKKESVLQLSSRLLQTFDGLRLLKEASAEELSSISGIGRAKAVQILAALELGRRIHSLACKDRYVIRFPEDAANFLMGDMRFLSQEHFVCVYLNTKNQVIHKRTVFIGSLNSSIVHPREVFKEALKRSAASFICVHNHPSGDPAPSREDIEVTQRLHESGQLLGIELLDHIIIGDQKFVSLKEKGYL.

Positions 102–224 (VIRFPEDAAN…FVSLKEKGYL (123 aa)) constitute an MPN domain. Residues His173, His175, and Asp186 each contribute to the Zn(2+) site. Residues 173–186 (HNHPSGDPAPSRED) carry the JAMM motif motif.

It belongs to the UPF0758 family.

The protein is UPF0758 protein BLi02933/BL00636 of Bacillus licheniformis (strain ATCC 14580 / DSM 13 / JCM 2505 / CCUG 7422 / NBRC 12200 / NCIMB 9375 / NCTC 10341 / NRRL NRS-1264 / Gibson 46).